Here is a 207-residue protein sequence, read N- to C-terminus: Ribonuclease HII (207 aa).

In terms of domain architecture, RNase H type-2 spans 17 to 207; the sequence is RIVAGVDEVG…SFKPLAAFVD (191 aa). Aspartate 23, glutamate 24, and aspartate 120 together coordinate a divalent metal cation.

The protein belongs to the RNase HII family. The cofactor is Mn(2+). Mg(2+) serves as cofactor.

The protein localises to the cytoplasm. The catalysed reaction is Endonucleolytic cleavage to 5'-phosphomonoester.. Functionally, endonuclease that specifically degrades the RNA of RNA-DNA hybrids. This Herpetosiphon aurantiacus (strain ATCC 23779 / DSM 785 / 114-95) protein is Ribonuclease HII.